We begin with the raw amino-acid sequence, 236 residues long: Uridylate kinase (236 aa).

9-12 (KISG) contacts ATP. G51 serves as a coordination point for UMP. ATP-binding residues include G52 and R56. Residues D71 and 132–139 (TGNSHFTT) each bind UMP. Positions 166 and 169 each coordinate ATP.

The protein belongs to the UMP kinase family. As to quaternary structure, homohexamer.

Its subcellular location is the cytoplasm. It carries out the reaction UMP + ATP = UDP + ADP. Its pathway is pyrimidine metabolism; CTP biosynthesis via de novo pathway; UDP from UMP (UMPK route): step 1/1. Its activity is regulated as follows. Inhibited by UTP. Catalyzes the reversible phosphorylation of UMP to UDP. The chain is Uridylate kinase from Mycoplasmoides gallisepticum (strain R(low / passage 15 / clone 2)) (Mycoplasma gallisepticum).